The following is a 98-amino-acid chain: Acylphosphatase (98 aa).

Residues 10 to 96 (ARLLRIRGRV…TDGAGFDCLP (87 aa)) enclose the Acylphosphatase-like domain. Catalysis depends on residues Arg25 and Asn43.

The protein belongs to the acylphosphatase family.

It carries out the reaction an acyl phosphate + H2O = a carboxylate + phosphate + H(+). The sequence is that of Acylphosphatase (acyP) from Azoarcus sp. (strain BH72).